The primary structure comprises 110 residues: Large ribosomal subunit protein uL22 (110 aa).

It belongs to the universal ribosomal protein uL22 family. Part of the 50S ribosomal subunit.

Its function is as follows. This protein binds specifically to 23S rRNA; its binding is stimulated by other ribosomal proteins, e.g. L4, L17, and L20. It is important during the early stages of 50S assembly. It makes multiple contacts with different domains of the 23S rRNA in the assembled 50S subunit and ribosome. The globular domain of the protein is located near the polypeptide exit tunnel on the outside of the subunit, while an extended beta-hairpin is found that lines the wall of the exit tunnel in the center of the 70S ribosome. This is Large ribosomal subunit protein uL22 from Haemophilus influenzae (strain 86-028NP).